Consider the following 247-residue polypeptide: MSQVNMRDMLKAGCHFGHQTRYWNPKMGKYIFGARNKIHIINLEKTLPMFNEALTFVERLASGKNKILFVGTKRSAGKIVAEEAARCGSPYVDHRWLGGMLTNFKTIRQSIKRLRELEVQAEDGTFAKLTKKEALMRTRDLEKLDRSLGGIKDMGGLPDALFVIDVDHERIAITEANKLGIPVIGVVDTNSSPEGVDYIIPGNDDAIRAIQLYMGSMADAVIRGRNNVAGGTDVFVEEAPAAAAVEG.

Belongs to the universal ribosomal protein uS2 family.

In Pseudomonas syringae pv. syringae (strain B728a), this protein is Small ribosomal subunit protein uS2.